We begin with the raw amino-acid sequence, 108 residues long: Pyrimidine/purine nucleoside phosphorylase (108 aa).

This sequence belongs to the nucleoside phosphorylase PpnP family.

The enzyme catalyses a purine D-ribonucleoside + phosphate = a purine nucleobase + alpha-D-ribose 1-phosphate. It catalyses the reaction adenosine + phosphate = alpha-D-ribose 1-phosphate + adenine. It carries out the reaction cytidine + phosphate = cytosine + alpha-D-ribose 1-phosphate. The catalysed reaction is guanosine + phosphate = alpha-D-ribose 1-phosphate + guanine. The enzyme catalyses inosine + phosphate = alpha-D-ribose 1-phosphate + hypoxanthine. It catalyses the reaction thymidine + phosphate = 2-deoxy-alpha-D-ribose 1-phosphate + thymine. It carries out the reaction uridine + phosphate = alpha-D-ribose 1-phosphate + uracil. The catalysed reaction is xanthosine + phosphate = alpha-D-ribose 1-phosphate + xanthine. In terms of biological role, catalyzes the phosphorolysis of diverse nucleosides, yielding D-ribose 1-phosphate and the respective free bases. Can use uridine, adenosine, guanosine, cytidine, thymidine, inosine and xanthosine as substrates. Also catalyzes the reverse reactions. This chain is Pyrimidine/purine nucleoside phosphorylase, found in Polaromonas sp. (strain JS666 / ATCC BAA-500).